A 441-amino-acid polypeptide reads, in one-letter code: Glutamate--tRNA ligase 1 (441 aa).

The short motif at 8-18 (PSPTGYIHIGN) is the 'HIGH' region element. Positions 239–243 (ALSKR) match the 'KMSKS' region motif. Lysine 242 provides a ligand contact to ATP.

It belongs to the class-I aminoacyl-tRNA synthetase family. Glutamate--tRNA ligase type 1 subfamily. In terms of assembly, monomer.

It is found in the cytoplasm. The catalysed reaction is tRNA(Glu) + L-glutamate + ATP = L-glutamyl-tRNA(Glu) + AMP + diphosphate. Catalyzes the attachment of glutamate to tRNA(Glu) in a two-step reaction: glutamate is first activated by ATP to form Glu-AMP and then transferred to the acceptor end of tRNA(Glu). This Roseobacter denitrificans (strain ATCC 33942 / OCh 114) (Erythrobacter sp. (strain OCh 114)) protein is Glutamate--tRNA ligase 1.